The sequence spans 393 residues: Pyrimidine monooxygenase RutA (393 aa).

FMN is bound by residues 79 to 80 (IK), Asn145, Glu154, 170 to 171 (RY), and Ser220.

It belongs to the NtaA/SnaA/DszA monooxygenase family. RutA subfamily.

The enzyme catalyses uracil + FMNH2 + NADH + O2 = (Z)-3-ureidoacrylate + FMN + NAD(+) + H2O + H(+). It carries out the reaction thymine + FMNH2 + NADH + O2 = (Z)-2-methylureidoacrylate + FMN + NAD(+) + H2O + H(+). In terms of biological role, catalyzes the pyrimidine ring opening between N-3 and C-4 by an unusual flavin hydroperoxide-catalyzed mechanism, adding oxygen atoms in the process to yield ureidoacrylate peracid, that immediately reacts with FMN forming ureidoacrylate and FMN-N(5)-oxide. The FMN-N(5)-oxide reacts spontaneously with NADH to produce FMN. Requires the flavin reductase RutF to regenerate FMN in vivo. The sequence is that of Pyrimidine monooxygenase RutA from Escherichia coli O9:H4 (strain HS).